Reading from the N-terminus, the 315-residue chain is 4-diphosphocytidyl-2-C-methyl-D-erythritol kinase (315 aa).

Lysine 11 is a catalytic residue. Residue 99–109 participates in ATP binding; that stretch reads PMAAGLAGGSA. Aspartate 141 is a catalytic residue.

It belongs to the GHMP kinase family. IspE subfamily.

The catalysed reaction is 4-CDP-2-C-methyl-D-erythritol + ATP = 4-CDP-2-C-methyl-D-erythritol 2-phosphate + ADP + H(+). It participates in isoprenoid biosynthesis; isopentenyl diphosphate biosynthesis via DXP pathway; isopentenyl diphosphate from 1-deoxy-D-xylulose 5-phosphate: step 3/6. Its function is as follows. Catalyzes the phosphorylation of the position 2 hydroxy group of 4-diphosphocytidyl-2C-methyl-D-erythritol. The protein is 4-diphosphocytidyl-2-C-methyl-D-erythritol kinase of Synechocystis sp. (strain ATCC 27184 / PCC 6803 / Kazusa).